A 366-amino-acid polypeptide reads, in one-letter code: MIRTEEMLLNVGPQHPSTHGVFRLVIKIDGEIIKEATPVIGYLHRGTEKIAESLQYTQIIPYTDRMDYLSAMTNNYVICHAVETMMGLEIPERAEYLRVLAMELGRIASHLVWWGTNLLDIGAVSPFLYAFREREMIINLLNELCGARLTFNYMRVGGVKWDAPDGWIEKVEEFVPYMREQLAGYHDLVSGNEIFLNRVKGVGIYSAEEAISYSLSGANLRCTGVNWDLRKDEPYSIYDRFDFDIPVGSVGDAWDRYVCRMQEIEESLKIVEQAVQQFPKDGAVLAKVPKIIKAPKGEAFVRIESPRGEIGCYIASDGKKEPYRLKFRRPSFYNLQILPKLLKGENIANLITILGGVDIVLGEVDG.

Belongs to the complex I 49 kDa subunit family. NDH-1 is composed of 14 different subunits. Subunits NuoB, C, D, E, F, and G constitute the peripheral sector of the complex.

The protein resides in the cell membrane. The enzyme catalyses a quinone + NADH + 5 H(+)(in) = a quinol + NAD(+) + 4 H(+)(out). Its function is as follows. NDH-1 shuttles electrons from NADH, via FMN and iron-sulfur (Fe-S) centers, to quinones in the respiratory chain. The immediate electron acceptor for the enzyme in this species is believed to be a menaquinone. Couples the redox reaction to proton translocation (for every two electrons transferred, four hydrogen ions are translocated across the cytoplasmic membrane), and thus conserves the redox energy in a proton gradient. The polypeptide is NADH-quinone oxidoreductase subunit D (Bacillus cereus (strain ATCC 14579 / DSM 31 / CCUG 7414 / JCM 2152 / NBRC 15305 / NCIMB 9373 / NCTC 2599 / NRRL B-3711)).